The following is a 452-amino-acid chain: Gastrin/cholecystokinin type B receptor (452 aa).

The Extracellular portion of the chain corresponds to 1 to 57 (MELLKLNRSLPGPGPGAALCRPEGPLLNGSGAGNLSCEPPRIRGAGTRELELAVRIT). N-linked (GlcNAc...) asparagine glycans are attached at residues Asn7, Asn28, and Asn34. The helical transmembrane segment at 58–78 (LYAAIFLMSVAGNVLIIVVLG) threads the bilayer. Residues 79–99 (LSRRLRTVTNAFLLSLAVSDL) lie on the Cytoplasmic side of the membrane. The helical transmembrane segment at 100-120 (LLAVACMPFTLLPNLMGTFIF) threads the bilayer. The Extracellular portion of the chain corresponds to 121 to 127 (GTVVCKA). A disulfide bridge links Cys125 with Cys203. Residues 128–148 (VSYFMGVSVSVSTLSLVAIAL) form a helical membrane-spanning segment. Topologically, residues 149 to 171 (ERYSAICRPLQARVWQTRSHAAR) are cytoplasmic. The chain crosses the membrane as a helical span at residues 172 to 192 (VIVATWMLSGLLMVPYPVYTA). Topologically, residues 193–218 (VQPAGPRVLQCMHRWPSARIRQTWSV) are extracellular. The helical transmembrane segment at 219–239 (LLLLLLFFVPGVVMAVAYGLI) threads the bilayer. Residues 240–339 (SRELYLGLRF…LLAKKRVVRM (100 aa)) lie on the Cytoplasmic side of the membrane. The interval 256 to 285 (ESQSQVGSQGGLPGGAGQGPAHPNGHCRSE) is disordered. Over residues 263–273 (SQGGLPGGAGQ) the composition is skewed to gly residues. A helical membrane pass occupies residues 340–360 (LLVIVVLFFLCWLPVYSANTW). The Extracellular segment spans residues 361–376 (RAFDGPGAHRALSGAP). Residues 377-397 (ISFIHLLSYASACVNPLVYCF) traverse the membrane as a helical segment. Residues 398 to 452 (MHRRFRQACLDTCARCCPRPPRARPRPLPDEDPPTPSIASLSRLSYTTISTLGPG) are Cytoplasmic-facing. Residue Cys413 is the site of S-palmitoyl cysteine attachment.

Belongs to the G-protein coupled receptor 1 family.

It is found in the cell membrane. Functionally, receptor for gastrin and cholecystokinin. The CCK-B receptors occur throughout the central nervous system where they modulate anxiety, analgesia, arousal, and neuroleptic activity. This receptor mediates its action by association with G proteins that activate a phosphatidylinositol-calcium second messenger system. The protein is Gastrin/cholecystokinin type B receptor of Sus scrofa (Pig).